Here is an 887-residue protein sequence, read N- to C-terminus: MKKLTSAQVRRMFLEFFQEKGHAVEPSASLIPVDDPSLLWINSGVATLKKYFDGRIVPENPRICIVPENPRICNAQKSIRTNDIENVGKTARHHTFFEMLGNFSIGDYFKREAIHWAWEFLTSDKWIGFDPERLSVTVHPEDEEAYNIWRNEIGLPEERIIRLEGNFWDIGEGPSGPNTEIFYDRGEAFGNDPNDPELYPGGENDRYLEVWNLVFSQFNHNPDGTYTPLPKKNIDTGMGLERMCSILQDVPTNFETDLFLPIIRATEQIAGERYGEDPDKDVAFKVIADHIRAVTFAIGDGALPSNEGRGYVLRRLLRRAVRYAKHIGIDRPFMYELVPVVGEIMHDYYPEVKEKADFIARVIRTEEERFHETLHEGLAILAEVIEKAKEQGSDVIPGEEAFRLYDTYGFPIELTEEYAAEAGMTVDHAGFEREMERQRERARAARQDVDSMQVQGGVLGDIKDESRFVGYDELVAASTVIAIVKDGRLVEEVKAGEEAQIIVDVTPFYAESGGQIADQGVFESETGTAVVKDVQKAPNGQHLHAIIVERGTVKKGSRYTARVDEAKRMRIVKNHTATHLLHQALKDVLGRHVNQAGSLVAPDRLRFDFTHFGQVKPEELERIEAIVNEQIWKSLPVDIFYKPLEEAKAMGAMALFGEKYGDIVRVVKVGDYSLELCGGCHVPNTSAIGLFKIVSESGIGAGTRRIEAVTGEAAYRFMSEQLAILQEAAQKLKTSPKELNARLDGLFAELKELERENESLAARLAHMEAEHLTRQVKDVNGVPVLAAKVQANDMNQLRAMADDLKQKLGTAVIVLASAQGGKVQLIAAVTDDLVKKGFHAGKLVKEVASRCGGGGGGRPDLAQAGGKDPSKVGEALGYVETWVKSVS.

Histidine 575, histidine 579, cysteine 677, and histidine 681 together coordinate Zn(2+).

It belongs to the class-II aminoacyl-tRNA synthetase family. The cofactor is Zn(2+).

It localises to the cytoplasm. The enzyme catalyses tRNA(Ala) + L-alanine + ATP = L-alanyl-tRNA(Ala) + AMP + diphosphate. Its function is as follows. Catalyzes the attachment of alanine to tRNA(Ala) in a two-step reaction: alanine is first activated by ATP to form Ala-AMP and then transferred to the acceptor end of tRNA(Ala). Also edits incorrectly charged Ser-tRNA(Ala) and Gly-tRNA(Ala) via its editing domain. This Geobacillus kaustophilus (strain HTA426) protein is Alanine--tRNA ligase.